Here is a 568-residue protein sequence, read N- to C-terminus: Sulfite reductase [NADPH] hemoprotein beta-component (568 aa).

Residues cysteine 426, cysteine 432, cysteine 471, and cysteine 475 each coordinate [4Fe-4S] cluster. Cysteine 475 lines the siroheme pocket.

This sequence belongs to the nitrite and sulfite reductase 4Fe-4S domain family. In terms of assembly, alpha(8)-beta(8). The alpha component is a flavoprotein, the beta component is a hemoprotein. The cofactor is siroheme. It depends on [4Fe-4S] cluster as a cofactor.

The enzyme catalyses hydrogen sulfide + 3 NADP(+) + 3 H2O = sulfite + 3 NADPH + 4 H(+). It participates in sulfur metabolism; hydrogen sulfide biosynthesis; hydrogen sulfide from sulfite (NADPH route): step 1/1. Functionally, component of the sulfite reductase complex that catalyzes the 6-electron reduction of sulfite to sulfide. This is one of several activities required for the biosynthesis of L-cysteine from sulfate. This Xylella fastidiosa (strain 9a5c) protein is Sulfite reductase [NADPH] hemoprotein beta-component.